We begin with the raw amino-acid sequence, 339 residues long: UDP-3-O-acylglucosamine N-acyltransferase (339 aa).

H238 functions as the Proton acceptor in the catalytic mechanism.

This sequence belongs to the transferase hexapeptide repeat family. LpxD subfamily. As to quaternary structure, homotrimer.

The catalysed reaction is a UDP-3-O-[(3R)-3-hydroxyacyl]-alpha-D-glucosamine + a (3R)-hydroxyacyl-[ACP] = a UDP-2-N,3-O-bis[(3R)-3-hydroxyacyl]-alpha-D-glucosamine + holo-[ACP] + H(+). It functions in the pathway bacterial outer membrane biogenesis; LPS lipid A biosynthesis. In terms of biological role, catalyzes the N-acylation of UDP-3-O-acylglucosamine using 3-hydroxyacyl-ACP as the acyl donor. Is involved in the biosynthesis of lipid A, a phosphorylated glycolipid that anchors the lipopolysaccharide to the outer membrane of the cell. The protein is UDP-3-O-acylglucosamine N-acyltransferase of Aeromonas hydrophila subsp. hydrophila (strain ATCC 7966 / DSM 30187 / BCRC 13018 / CCUG 14551 / JCM 1027 / KCTC 2358 / NCIMB 9240 / NCTC 8049).